Here is a 405-residue protein sequence, read N- to C-terminus: Nicotinate phosphoribosyltransferase (405 aa).

Phosphohistidine; by autocatalysis is present on His224.

Belongs to the NAPRTase family. In terms of processing, transiently phosphorylated on a His residue during the reaction cycle. Phosphorylation strongly increases the affinity for substrates and increases the rate of nicotinate D-ribonucleotide production. Dephosphorylation regenerates the low-affinity form of the enzyme, leading to product release.

The catalysed reaction is nicotinate + 5-phospho-alpha-D-ribose 1-diphosphate + ATP + H2O = nicotinate beta-D-ribonucleotide + ADP + phosphate + diphosphate. The protein operates within cofactor biosynthesis; NAD(+) biosynthesis; nicotinate D-ribonucleotide from nicotinate: step 1/1. In terms of biological role, catalyzes the synthesis of beta-nicotinate D-ribonucleotide from nicotinate and 5-phospho-D-ribose 1-phosphate at the expense of ATP. This Methanococcoides burtonii (strain DSM 6242 / NBRC 107633 / OCM 468 / ACE-M) protein is Nicotinate phosphoribosyltransferase.